Consider the following 549-residue polypeptide: Rhodopsin kinase grk7a (549 aa).

Residue serine 33 is modified to Phosphoserine. Positions 53 to 171 constitute an RGS domain; that stretch reads FESLCEKQPI…QASPFFDKFL (119 aa). Positions 186–449 constitute a Protein kinase domain; sequence FYEFRTLGKG…NDDPRKHEWF (264 aa). ATP contacts are provided by residues 192–200 and lysine 215; that span reads LGKGGFGEV. Aspartate 311 acts as the Proton acceptor in catalysis. The AGC-kinase C-terminal domain occupies 450–515; the sequence is KSINFARLEA…GAVSIAWQQE (66 aa). The tract at residues 522-549 is disordered; it reads FDELSDPNRKESSGGSDDDKKSGTCTLL. Basic and acidic residues predominate over residues 527–543; the sequence is DPNRKESSGGSDDDKKS. The residue at position 546 (cysteine 546) is a Cysteine methyl ester. Cysteine 546 carries S-geranylgeranyl cysteine lipidation. A propeptide spans 547 to 549 (removed in mature form); it reads TLL.

The protein belongs to the protein kinase superfamily. AGC Ser/Thr protein kinase family. GPRK subfamily. Post-translationally, phosphorylation at Ser-33 is regulated by light and activated by cAMP.

It localises to the membrane. It catalyses the reaction L-threonyl-[rhodopsin] + ATP = O-phospho-L-threonyl-[rhodopsin] + ADP + H(+). The enzyme catalyses L-seryl-[rhodopsin] + ATP = O-phospho-L-seryl-[rhodopsin] + ADP + H(+). In terms of biological role, retina-specific kinase involved in the shutoff of the photoresponse and adaptation to changing light conditions via cone opsin phosphorylation, including rhodopsin (RHO). This is Rhodopsin kinase grk7a (grk7a) from Danio rerio (Zebrafish).